The primary structure comprises 416 residues: CinA-like protein (416 aa).

The protein belongs to the CinA family.

This Synechocystis sp. (strain ATCC 27184 / PCC 6803 / Kazusa) protein is CinA-like protein.